Here is a 706-residue protein sequence, read N- to C-terminus: Protein MAM3 (706 aa).

At 1–16 (MSFLPLRSRSRSGAPH) the chain is on the vacuolar side. The chain crosses the membrane as a helical span at residues 17–37 (WVYIILYHIFTIPKIYSLPLL). The Cytoplasmic portion of the chain corresponds to 38–65 (SGSHVLNSRDVADSGHSVGDEASVTTYY). One can recognise a CNNM transmembrane domain in the interval 57-240 (DEASVTTYYI…MGVERLTKDE (184 aa)). Residues 66–86 (IISIILVLLGGVFAGLTLGLM) traverse the membrane as a helical segment. The Vacuolar portion of the chain corresponds to 87–120 (GQDEVYLKVISTSGSNSEKKLAKRVLDLISRGKH). Residues 121 to 141 (WVLVTLLLSNVITNETLPIVL) form a helical membrane-spanning segment. Residues 142-145 (DRCL) lie on the Cytoplasmic side of the membrane. The helical transmembrane segment at 146 to 166 (GGGWQAVVSSTILIVIFGEII) threads the bilayer. The Vacuolar portion of the chain corresponds to 167–177 (PQSVCVKYGLQ). Residues 178–198 (VGAFFCPFVLVLMYLMYPVAY) traverse the membrane as a helical segment. Residues 199 to 706 (PIATLLDYML…ANGSSSTIKR (508 aa)) are Cytoplasmic-facing. 2 CBS domains span residues 259–320 (MTPI…DCLP) and 321–386 (ISHF…IVDE). 3 disordered regions span residues 421 to 495 (SHKE…ASNP), 515 to 540 (ITTHTPHSSKEPSPAPHSNDKSLSAE), and 557 to 597 (LHTQ…ENQN). Residues 433 to 445 (ESSPLLSPSNSNH) show a composition bias toward low complexity. Ser-439 and Ser-447 each carry phosphoserine. A compositionally biased stretch (polar residues) spans 472–495 (AVLSPTPQVTEHGTIIPSNLASNP). Phosphoserine is present on Ser-527. Residues 566 to 575 (TQVTTSTKTT) show a composition bias toward low complexity. The span at 576–597 (RNSPDSISIPNSGANHGNENQN) shows a compositional bias: polar residues. At Ser-603 the chain carries Phosphoserine. Residue Tyr-604 is modified to Phosphotyrosine. Phosphothreonine is present on Thr-607. A Phosphoserine modification is found at Ser-614. A disordered region spans residues 626 to 706 (IGPAKDWDES…ANGSSSTIKR (81 aa)). Basic and acidic residues predominate over residues 630 to 639 (KDWDESKSEY). A compositionally biased stretch (low complexity) spans 658–680 (SSSNASLFSSIKNKFKNENANNN). Polar residues predominate over residues 681 to 706 (DRSNFTDSLSRTSNYDANGSSSTIKR).

It belongs to the ACDP family.

Its subcellular location is the vacuole membrane. In terms of biological role, involved in metal homeostasis and more specially in manganese sensitivity. This Saccharomyces cerevisiae (strain ATCC 204508 / S288c) (Baker's yeast) protein is Protein MAM3 (MAM3).